Here is an 88-residue protein sequence, read N- to C-terminus: Apolipoprotein C-I (88 aa).

A signal peptide spans 1-26; sequence MRLILSLPVLVVVLSMVLEGPAPAQA.

This sequence belongs to the apolipoprotein C1 family. As to expression, expressed in the liver.

Its subcellular location is the secreted. Functionally, inhibitor of lipoprotein binding to the low density lipoprotein (LDL) receptor, LDL receptor-related protein, and very low density lipoprotein (VLDL) receptor. Associates with high density lipoproteins (HDL) and the triacylglycerol-rich lipoproteins in the plasma and makes up about 10% of the protein of the VLDL and 2% of that of HDL. Appears to interfere directly with fatty acid uptake and is also the major plasma inhibitor of cholesteryl ester transfer protein (CETP). Binds free fatty acids and reduces their intracellular esterification. Modulates the interaction of APOE with beta-migrating VLDL and inhibits binding of beta-VLDL to the LDL receptor-related protein. This chain is Apolipoprotein C-I (APOC1), found in Canis lupus familiaris (Dog).